A 262-amino-acid chain; its full sequence is MMYKAVFSDFNGTLLTSQHTISPRTVVVIKRLTANGIPFVPISARSPLGILPYWKQLETNNVLVAFSGALILNQNLEPIYSVQIEPKDILEINTVLAEHPLLGVNYYTNNDCHARDVENKWVIYERSVTKIEIHPFDEVATRSPHKIQIIGEAEEIIEIEVLLKEKFPHLSICRSHANFLEVMHKSATKGSAVRFLEDYFGVQTNEVIAFGDNFNDLDMLEHVGLGVAMGNAPNEIKQAANVVTATNNEDGLALILEEKFPE.

Asp-9 serves as the catalytic Nucleophile. Residues Asp-9 and Asn-11 each coordinate Mg(2+). Residues Ser-43–Ala-44 and Lys-189 each bind phosphate. Position 212 (Asp-212) interacts with Mg(2+). Asn-215 is a phosphate binding site.

The protein belongs to the HAD-like hydrolase superfamily. Cof family. Mg(2+) serves as cofactor.

The sequence is that of Putative phosphatase HI_0003 from Haemophilus influenzae (strain ATCC 51907 / DSM 11121 / KW20 / Rd).